Reading from the N-terminus, the 250-residue chain is Ribosomal RNA small subunit methyltransferase J (250 aa).

S-adenosyl-L-methionine contacts are provided by residues 101–102 (RD), 117–118 (ER), 153–154 (SS), and aspartate 171.

Belongs to the methyltransferase superfamily. RsmJ family.

It localises to the cytoplasm. It carries out the reaction guanosine(1516) in 16S rRNA + S-adenosyl-L-methionine = N(2)-methylguanosine(1516) in 16S rRNA + S-adenosyl-L-homocysteine + H(+). Its function is as follows. Specifically methylates the guanosine in position 1516 of 16S rRNA. The polypeptide is Ribosomal RNA small subunit methyltransferase J (Shigella boydii serotype 18 (strain CDC 3083-94 / BS512)).